The following is a 360-amino-acid chain: Hydroxyproline O-arabinosyltransferase RDN2 (360 aa).

A helical; Signal-anchor membrane pass occupies residues 13–33 (VLGSSFATYNLVTMIIHYGSA).

It localises to the golgi apparatus membrane. The enzyme catalyses trans-4-hydroxy-L-prolyl-[protein] + UDP-beta-L-arabinofuranose = O-(beta-L-arabinofuranosyl)-trans-4-hydroxy-L-prolyl-[protein] + UDP + H(+). Glycosyltransferase involved in the O-arabinosylation of several proteins including extensins and small signaling peptides. Catalyzes the transfer of the initial L-arabinose to the hydroxyl group of Hyp residues. Probably involved in the arabinosylation of CLAVATA3/ESR-related (CLE) signaling peptides that move from root to shoot, to interact with SUNN receptor kinase signaling that regulates nodulation. Involved in long distance nodulation signaling events. Involved in the autoregulation of nodulation (AON), a long distance systemic signaling from root to shoot and back again, which allows legumes to limit the number of root nodules formed based on available nitrogen and previous rhizobial colonization. Functions in the root, upstream of the shoot receptor kinase SUNN and via CLE peptide, to control AON. In Medicago truncatula (Barrel medic), this protein is Hydroxyproline O-arabinosyltransferase RDN2.